The following is a 291-amino-acid chain: 4-diphosphocytidyl-2-C-methyl-D-erythritol kinase (291 aa).

Lys-12 is a catalytic residue. 95–105 (PDGGGLGGGSS) is a binding site for ATP. Residue Asp-137 is part of the active site.

Belongs to the GHMP kinase family. IspE subfamily.

The catalysed reaction is 4-CDP-2-C-methyl-D-erythritol + ATP = 4-CDP-2-C-methyl-D-erythritol 2-phosphate + ADP + H(+). It functions in the pathway isoprenoid biosynthesis; isopentenyl diphosphate biosynthesis via DXP pathway; isopentenyl diphosphate from 1-deoxy-D-xylulose 5-phosphate: step 3/6. In terms of biological role, catalyzes the phosphorylation of the position 2 hydroxy group of 4-diphosphocytidyl-2C-methyl-D-erythritol. The sequence is that of 4-diphosphocytidyl-2-C-methyl-D-erythritol kinase from Alkalilimnicola ehrlichii (strain ATCC BAA-1101 / DSM 17681 / MLHE-1).